Reading from the N-terminus, the 181-residue chain is NAD(P)H-quinone oxidoreductase subunit I, chloroplastic (181 aa).

4Fe-4S ferredoxin-type domains follow at residues G55–E84 and K95–E124. [4Fe-4S] cluster is bound by residues C64, C67, C70, C74, C104, C107, C110, and C114.

It belongs to the complex I 23 kDa subunit family. As to quaternary structure, NDH is composed of at least 16 different subunits, 5 of which are encoded in the nucleus. The cofactor is [4Fe-4S] cluster.

Its subcellular location is the plastid. The protein localises to the chloroplast thylakoid membrane. The enzyme catalyses a plastoquinone + NADH + (n+1) H(+)(in) = a plastoquinol + NAD(+) + n H(+)(out). It carries out the reaction a plastoquinone + NADPH + (n+1) H(+)(in) = a plastoquinol + NADP(+) + n H(+)(out). In terms of biological role, NDH shuttles electrons from NAD(P)H:plastoquinone, via FMN and iron-sulfur (Fe-S) centers, to quinones in the photosynthetic chain and possibly in a chloroplast respiratory chain. The immediate electron acceptor for the enzyme in this species is believed to be plastoquinone. Couples the redox reaction to proton translocation, and thus conserves the redox energy in a proton gradient. The sequence is that of NAD(P)H-quinone oxidoreductase subunit I, chloroplastic from Physcomitrium patens (Spreading-leaved earth moss).